We begin with the raw amino-acid sequence, 396 residues long: Purine ribonucleoside efflux pump NepI (396 aa).

Residues M1–A21 are Cytoplasmic-facing. A helical membrane pass occupies residues V22–L42. At L43–E54 the chain is on the periplasmic side. Residues G55–I75 traverse the membrane as a helical segment. At T76 to C85 the chain is on the cytoplasmic side. The helical transmembrane segment at Y86–N106 threads the bilayer. A topological domain (periplasmic) is located at residue S107. Residues F108–M128 form a helical membrane-spanning segment. Topologically, residues S129–S147 are cytoplasmic. Residues V148–G168 traverse the membrane as a helical segment. Residues E169–N175 are Periplasmic-facing. The chain crosses the membrane as a helical span at residues V176–P196. At S197 to R215 the chain is on the cytoplasmic side. A helical membrane pass occupies residues P216 to F236. The Periplasmic portion of the chain corresponds to T237–T255. A helical membrane pass occupies residues L256–L276. The Cytoplasmic segment spans residues K277–K281. Residues L282–G302 traverse the membrane as a helical segment. At S303 to K305 the chain is on the periplasmic side. The chain crosses the membrane as a helical span at residues I306 to W326. Over S327–S343 the chain is Cytoplasmic. The chain crosses the membrane as a helical span at residues I344–L364. Residues D365 to N366 lie on the Periplasmic side of the membrane. Residues I367–V387 form a helical membrane-spanning segment. Topologically, residues T388–S396 are cytoplasmic.

The protein belongs to the major facilitator superfamily. DHA1 family. NepI (TC 2.A.1.2.26) subfamily.

It is found in the cell inner membrane. The catalysed reaction is inosine(in) + H(+)(out) = inosine(out) + H(+)(in). It catalyses the reaction guanosine(in) + H(+)(out) = guanosine(out) + H(+)(in). Functionally, involved in the efflux of purine ribonucleosides, such as inosine and guanosine. In Shigella boydii serotype 4 (strain Sb227), this protein is Purine ribonucleoside efflux pump NepI.